The primary structure comprises 378 residues: Chloroplast stem-loop binding protein of 41 kDa b, chloroplastic (378 aa).

Residues Met1–Ala50 constitute a chloroplast transit peptide. Ser240 carries the post-translational modification Phosphoserine.

This sequence belongs to the NAD(P)-dependent epimerase/dehydratase family. As to quaternary structure, component of a complex made of CSP41A, CSP41B, ribosomes, and the plastid-encoded RNA polymerase. Interacts with CSP41A. Binds DNA when in complex with PRIN2. Highly expressed in seedlings, particularly in photosynthetically active organs. Mostly expressed in young and mature leaves, and, to a lower extent, in flowers. Low expression in etiolated seedlings compared to green seedlings.

The protein resides in the plastid. It localises to the chloroplast. The protein localises to the plastoglobule. Its subcellular location is the cytoplasm. Binds and cleaves RNA, particularly in stem-loops. Associates with pre-ribosomal particles in chloroplasts, and participates in chloroplast ribosomal RNA metabolism, probably during the final steps of 23S rRNA maturation. May enhance transcription by the plastid-encoded polymerase and translation in plastid via the stabilization of ribosome assembly intermediates. Required for chloroplast integrity. Involved in the regulation of the circadian system. Involved in the regulation of heteroglycans and monosaccharide mobilization. Required for full expression of genes transcribed by the plastid-encoded RNA polymerase (PEP). Essential for embryo development. In Arabidopsis thaliana (Mouse-ear cress), this protein is Chloroplast stem-loop binding protein of 41 kDa b, chloroplastic (CSP41B).